A 373-amino-acid polypeptide reads, in one-letter code: Dual-specificity RNA methyltransferase RlmN (373 aa).

Residue Glu-94 is the Proton acceptor of the active site. The Radical SAM core domain maps to 100–339 (EEDRATLCVS…VIVRKTRGDD (240 aa)). A disulfide bond links Cys-107 and Cys-344. The [4Fe-4S] cluster site is built by Cys-114, Cys-118, and Cys-121. Residues 168 to 169 (GE), Ser-200, 222 to 224 (SIH), and Asn-301 each bind S-adenosyl-L-methionine. Cys-344 (S-methylcysteine intermediate) is an active-site residue.

The protein belongs to the radical SAM superfamily. RlmN family. [4Fe-4S] cluster serves as cofactor.

The protein localises to the cytoplasm. It carries out the reaction adenosine(2503) in 23S rRNA + 2 reduced [2Fe-2S]-[ferredoxin] + 2 S-adenosyl-L-methionine = 2-methyladenosine(2503) in 23S rRNA + 5'-deoxyadenosine + L-methionine + 2 oxidized [2Fe-2S]-[ferredoxin] + S-adenosyl-L-homocysteine. The enzyme catalyses adenosine(37) in tRNA + 2 reduced [2Fe-2S]-[ferredoxin] + 2 S-adenosyl-L-methionine = 2-methyladenosine(37) in tRNA + 5'-deoxyadenosine + L-methionine + 2 oxidized [2Fe-2S]-[ferredoxin] + S-adenosyl-L-homocysteine. Functionally, specifically methylates position 2 of adenine 2503 in 23S rRNA and position 2 of adenine 37 in tRNAs. m2A2503 modification seems to play a crucial role in the proofreading step occurring at the peptidyl transferase center and thus would serve to optimize ribosomal fidelity. The sequence is that of Dual-specificity RNA methyltransferase RlmN from Shewanella frigidimarina (strain NCIMB 400).